The chain runs to 518 residues: Integrator complex subunit 14 (518 aa).

Residues 2 to 204 (PTVVVMDVSL…KNVQSMFGKL (203 aa)) form the VWFA domain. Residues serine 10, serine 12, and threonine 86 each coordinate Mg(2+). An N6-acetyllysine modification is found at lysine 418.

This sequence belongs to the Integrator subunit 14 family. In terms of assembly, component of the Integrator complex, composed of core subunits INTS1, INTS2, INTS3, INTS4, INTS5, INTS6, INTS7, INTS8, INTS9/RC74, INTS10, INTS11/CPSF3L, INTS12, INTS13, INTS14 and INTS15. The core complex associates with protein phosphatase 2A subunits PPP2CA and PPP2R1A, to form the Integrator-PP2A (INTAC) complex. INTS14 is part of the tail subcomplex, composed of INTS10, INTS13, INTS14 and INTS15. As to expression, strongly expressed in numerous cancer cells compared with their non-cancerous counterparts (lung, prostate, colon, stomach and skin).

It localises to the nucleus. In terms of biological role, component of the integrator complex, a multiprotein complex that terminates RNA polymerase II (Pol II) transcription in the promoter-proximal region of genes. The integrator complex provides a quality checkpoint during transcription elongation by driving premature transcription termination of transcripts that are unfavorably configured for transcriptional elongation: the complex terminates transcription by (1) catalyzing dephosphorylation of the C-terminal domain (CTD) of Pol II subunit POLR2A/RPB1 and SUPT5H/SPT5, (2) degrading the exiting nascent RNA transcript via endonuclease activity and (3) promoting the release of Pol II from bound DNA. The integrator complex is also involved in terminating the synthesis of non-coding Pol II transcripts, such as enhancer RNAs (eRNAs), small nuclear RNAs (snRNAs), telomerase RNAs and long non-coding RNAs (lncRNAs). Within the integrator complex, INTS14 is part of the integrator tail module that acts as a platform for the recruitment of transcription factors at promoters. The protein is Integrator complex subunit 14 of Homo sapiens (Human).